The primary structure comprises 184 residues: Dual specificity protein phosphatase 22 (184 aa).

A lipid anchor (N-myristoyl glycine) is attached at Gly2. One can recognise a Tyrosine-protein phosphatase domain in the interval 4 to 144 (GMNKILPGLY…LQEFEKHEVH (141 aa)). Ser58 carries the post-translational modification Phosphoserine. The active-site Phosphocysteine intermediate is the Cys88. Leu89, Ala90, Val92, Ser93, and Arg94 together coordinate a protein.

The protein belongs to the protein-tyrosine phosphatase family. Non-receptor class dual specificity subfamily. In terms of assembly, monomer. Interacts with LCK; the interaction is direct. Interacts with UBR2; the interaction is direct. In terms of processing, myristoylation regulates subcellular location, and is necessary for activation of JNK. As to expression, ubiquitous. Highest expression seen in heart, placenta, lung, liver, kidney and pancreas.

The protein resides in the cytoplasm. The catalysed reaction is O-phospho-L-tyrosyl-[protein] + H2O = L-tyrosyl-[protein] + phosphate. It carries out the reaction O-phospho-L-seryl-[protein] + H2O = L-seryl-[protein] + phosphate. The enzyme catalyses O-phospho-L-threonyl-[protein] + H2O = L-threonyl-[protein] + phosphate. Dual specificity phosphatase; can dephosphorylate both phosphotyrosine and phosphoserine or phosphothreonine residues. Activates the JNK signaling pathway. Inhibits T-cell receptor signaling and T-cell mediated immune responses, acting, at least in part, by inducing degradation of E3 ubiquitin ligase UBR2. Dephosphorylates and thereby induces 'Lys-48'-linked ubiquitination of UBR2, leading to proteasomal degradation of UBR2. Dephosphorylates and thereby inactivates tyrosine kinase LCK. Inhibits UBR2-mediated 'Lys-63'-linked ubiquitination of LCK. May play a role in B-cell receptor (BCR) signaling and B-cell function. This is Dual specificity protein phosphatase 22 (DUSP22) from Homo sapiens (Human).